We begin with the raw amino-acid sequence, 1033 residues long: Probable LRR receptor-like serine/threonine-protein kinase At1g56140 (1033 aa).

The N-terminal stretch at 1 to 28 is a signal peptide; the sequence is MLRLWRYLCLLLTVWFLCNFGPVYVVRA. The Extracellular segment spans residues 29–636; the sequence is QNRTGATTHP…PSKGKSMTGT (608 aa). Asn30, Asn60, and Asn94 each carry an N-linked (GlcNAc...) asparagine glycan. LRR repeat units follow at residues 97-121, 122-145, 147-169, 170-193, 195-217, 241-264, 265-288, 289-313, 314-337, 339-361, 363-382, 383-406, and 422-445; these read ICRI…LWTL, EYLT…LGNL, RMRW…IGLL, TDLR…IGRC, KLQQ…FANL, WTKL…SFSN, LTSL…FIKD, MKSL…IGEY, SSLR…LFNL, QLTH…KGQS, SNVD…WVSL, PNLN…VLSG, and IYSD…VFER. Residue Asn144 is glycosylated (N-linked (GlcNAc...) asparagine). N-linked (GlcNAc...) asparagine glycosylation occurs at Asn181. N-linked (GlcNAc...) asparagine glycosylation is found at Asn264, Asn280, and Asn301. N-linked (GlcNAc...) asparagine glycans are attached at residues Asn347 and Asn351. N-linked (GlcNAc...) asparagine glycosylation occurs at Asn393. An N-linked (GlcNAc...) asparagine glycan is attached at Asn579. A helical transmembrane segment spans residues 637 to 657; that stretch reads IVGVIVGVGLLSIISGVVIFI. The Cytoplasmic segment spans residues 658 to 1033; that stretch reads IRKRRKRYTD…MLGAQMNEGR (376 aa). At Thr682 the chain carries Phosphothreonine. The Protein kinase domain maps to 693 to 951; it reads FDPSNKLGEG…LCTQTSHALR (259 aa). ATP-binding positions include 699–707 and Lys721; that span reads LGEGGFGPV. Residue Tyr766 is modified to Phosphotyrosine. Asp817 (proton acceptor) is an active-site residue. A phosphoserine mark is found at Ser821 and Ser850. A phosphothreonine mark is found at Thr851 and Thr856. The residue at position 864 (Tyr864) is a Phosphotyrosine. The tract at residues 1012–1033 is disordered; it reads SEISPRNNDARPMLGAQMNEGR.

It belongs to the protein kinase superfamily. Ser/Thr protein kinase family.

It localises to the membrane. It carries out the reaction L-seryl-[protein] + ATP = O-phospho-L-seryl-[protein] + ADP + H(+). The catalysed reaction is L-threonyl-[protein] + ATP = O-phospho-L-threonyl-[protein] + ADP + H(+). In Arabidopsis thaliana (Mouse-ear cress), this protein is Probable LRR receptor-like serine/threonine-protein kinase At1g56140.